Reading from the N-terminus, the 404-residue chain is Glucose-1-phosphate adenylyltransferase (404 aa).

Residues Y99, G164, 179–180 (EK), and S197 contribute to the alpha-D-glucose 1-phosphate site.

Belongs to the bacterial/plant glucose-1-phosphate adenylyltransferase family. As to quaternary structure, homotetramer.

The enzyme catalyses alpha-D-glucose 1-phosphate + ATP + H(+) = ADP-alpha-D-glucose + diphosphate. It functions in the pathway glycan biosynthesis; glycogen biosynthesis. In terms of biological role, involved in the biosynthesis of ADP-glucose, a building block required for the elongation reactions to produce glycogen. Catalyzes the reaction between ATP and alpha-D-glucose 1-phosphate (G1P) to produce pyrophosphate and ADP-Glc. In Rhodococcus erythropolis (strain PR4 / NBRC 100887), this protein is Glucose-1-phosphate adenylyltransferase.